We begin with the raw amino-acid sequence, 97 residues long: MKRISSDEVKKVAELARLELNENEIHQHAEQLEKILEYIKQLEKINTENIACTTRAIEVVNVLRKDERRDYENSDELLDLAPSRENKFFKVPKIINE.

The protein belongs to the GatC family. Heterotrimer of A, B and C subunits.

The catalysed reaction is L-glutamyl-tRNA(Gln) + L-glutamine + ATP + H2O = L-glutaminyl-tRNA(Gln) + L-glutamate + ADP + phosphate + H(+). The enzyme catalyses L-aspartyl-tRNA(Asn) + L-glutamine + ATP + H2O = L-asparaginyl-tRNA(Asn) + L-glutamate + ADP + phosphate + 2 H(+). Its function is as follows. Allows the formation of correctly charged Asn-tRNA(Asn) or Gln-tRNA(Gln) through the transamidation of misacylated Asp-tRNA(Asn) or Glu-tRNA(Gln) in organisms which lack either or both of asparaginyl-tRNA or glutaminyl-tRNA synthetases. The reaction takes place in the presence of glutamine and ATP through an activated phospho-Asp-tRNA(Asn) or phospho-Glu-tRNA(Gln). The polypeptide is Aspartyl/glutamyl-tRNA(Asn/Gln) amidotransferase subunit C (Prochlorococcus marinus (strain MIT 9515)).